The chain runs to 135 residues: Prostate and breast cancer overexpressed gene 1 protein (135 aa).

In terms of tissue distribution, expressed in colon, prostate, small intestine, testis and spleen, with lower expression in thymus, ovary, and peripheral blood leukocytes. Up-regulated expression in prostate, breast, and bladder cancer, but not in lung and colon cancer.

It localises to the cytoplasm. The protein resides in the nucleus. The protein is Prostate and breast cancer overexpressed gene 1 protein (PBOV1) of Homo sapiens (Human).